Here is a 201-residue protein sequence, read N- to C-terminus: CASP-like protein 1F2 (201 aa).

Residues 1-29 are Cytoplasmic-facing; that stretch reads MITSIATTTAGAFEVKSLGFIPYPSQPKR. Residues 30 to 50 traverse the membrane as a helical segment; that stretch reads IFFMAQVIFRILAIAFAVASI. Over 51 to 78 the chain is Extracellular; sequence SAMVTSDQNVIVFGMDTAARYSYSSAFR. A helical membrane pass occupies residues 79 to 99; that stretch reads FLVGANAVVCGFSVLSLIFVC. Residues 100 to 119 are Cytoplasmic-facing; the sequence is LMSRRSEAILEKNYYLFLHD. The helical transmembrane segment at 120-140 threads the bilayer; that stretch reads MVMMVMMVSGCSAATAIGYVG. The Extracellular segment spans residues 141 to 162; that stretch reads RYGEKEITWTAVCDFVGKFCNQ. A helical transmembrane segment spans residues 163 to 183; sequence ALVSIVLAYLALFCYVALTTL. Residues 184-201 are Cytoplasmic-facing; sequence AAHKLNHSSSTAAIRQNE.

Belongs to the Casparian strip membrane proteins (CASP) family. Homodimer and heterodimers.

It is found in the cell membrane. The polypeptide is CASP-like protein 1F2 (Ricinus communis (Castor bean)).